Here is a 412-residue protein sequence, read N- to C-terminus: Double C2-like domain-containing protein beta (412 aa).

Residues 1–36 form a negatively regulates targeting to plasma membrane region; that stretch reads MTLRRRGEKATISIQEHMAIDVCPGPIRPIKQISDY. The segment at 1 to 90 is mediates interaction with DYNLT1; it reads MTLRRRGEKA…EDVDQLFGAY (90 aa). The tract at residues 38 to 123 is disordered; it reads PRFPRGLPPT…PDVDGYESDD (86 aa). Positions 43 to 58 are enriched in pro residues; the sequence is GLPPTAAPRAPAPPDA. Positions 59-74 are enriched in low complexity; that stretch reads PARSPAASASPRSPSD. The span at 95–108 shows a compositional bias: pro residues; the sequence is GPSPGPSPARPPAK. Residues 112–123 are compositionally biased toward acidic residues; that stretch reads DEPDVDGYESDD. 2 consecutive C2 domains span residues 126 to 250 and 266 to 399; these read ALGT…SICL and ERGR…ERWH. Ca(2+) is bound by residues D157, D163, D218, D220, D297, D303, D357, D359, and D365. The mediates interaction with STXBP3 stretch occupies residues 257 to 375; it reads DKAEDKSLEE…FIGGVVLGIN (119 aa). At S411 the chain carries Phosphoserine.

As to quaternary structure, interacts with cytoplasmic dynein light chain DYNLT1. May interact with UNC13A; the interaction mediates targeting to the plasma membrane. Probably interacts with the SNARE (soluble N-ethylmaleimide-sensitive factor attached protein receptor) complex composed of SNAP25, STX1A and VAMP2; the interaction is calcium-dependent and competitive with SYT1. Interacts with STX4; the interaction is calcium-dependent, increased by insulin and glucose, and mediates vesicle fusion with plasma membrane in pancreatic cells and adipocytes. Interacts with STXBP3; the interaction is direct, occurs at the cell membrane and regulates glucose-stimulated insulin secretion. The cofactor is Ca(2+). In terms of tissue distribution, widely expressed. Expressed in pancreatic islet cells (at protein level).

It is found in the cytoplasm. The protein localises to the cytoplasmic granule. Its subcellular location is the cell membrane. Calcium sensor which positively regulates SNARE-dependent fusion of vesicles with membranes. Binds phospholipids in a calcium-dependent manner and may act at the priming stage of fusion by modifying membrane curvature to stimulate fusion. Involved in calcium-triggered exocytosis in chromaffin cells and calcium-dependent spontaneous release of neurotransmitter in absence of action potentials in neuronal cells. Involved both in glucose-stimulated insulin secretion in pancreatic cells and insulin-dependent GLUT4 transport to the plasma membrane in adipocytes. This is Double C2-like domain-containing protein beta (Doc2b) from Mus musculus (Mouse).